Reading from the N-terminus, the 102-residue chain is NADH-quinone oxidoreductase subunit K (102 aa).

Helical transmembrane passes span 5-25 (LAHYLVLGAILFAIGIFGIFL), 31-51 (IILLMSIELVLLAVNMNFVAF), and 62-82 (VFVFFILTVAAAEAAIGLAIL).

Belongs to the complex I subunit 4L family. In terms of assembly, NDH-1 is composed of 14 different subunits. Subunits NuoA, H, J, K, L, M, N constitute the membrane sector of the complex.

The protein resides in the cell inner membrane. The catalysed reaction is a quinone + NADH + 5 H(+)(in) = a quinol + NAD(+) + 4 H(+)(out). Functionally, NDH-1 shuttles electrons from NADH, via FMN and iron-sulfur (Fe-S) centers, to quinones in the respiratory chain. The immediate electron acceptor for the enzyme in this species is believed to be ubiquinone. Couples the redox reaction to proton translocation (for every two electrons transferred, four hydrogen ions are translocated across the cytoplasmic membrane), and thus conserves the redox energy in a proton gradient. The polypeptide is NADH-quinone oxidoreductase subunit K (Bordetella petrii (strain ATCC BAA-461 / DSM 12804 / CCUG 43448)).